The chain runs to 268 residues: Cytochrome b-c1 complex subunit Rieske-3, mitochondrial (268 aa).

The N-terminal 56 residues, 1-56 (MLRIAGRKLSSSAATRSSSAFFTRNPFTFTDDSSSPARSPSPASLASQFLDQFRGF), are a transit peptide targeting the mitochondrion. Topologically, residues 57–105 (SSNSVSPAHQTGLVSDLPATVAAIKNPSSKIVYDDSNHERYPPGDPSKR) are mitochondrial matrix. Residues 106–128 (AFAYFVLTGGRFVYASLVRLLIL) form a helical membrane-spanning segment. Residues 129–268 (KFVLSMSASK…FMEENKLLIG (140 aa)) are Mitochondrial intermembrane-facing. In terms of domain architecture, Rieske spans 178-266 (INLANSVDLG…YSFMEENKLL (89 aa)). Residues Cys-211, His-213, Cys-230, and His-233 each coordinate [2Fe-2S] cluster. Residues Cys-216 and Cys-232 are joined by a disulfide bond.

The protein belongs to the Rieske iron-sulfur protein family. As to quaternary structure, component of the ubiquinol-cytochrome c oxidoreductase (cytochrome b-c1 complex, complex III, CIII), a multisubunit enzyme composed of 3 respiratory subunits cytochrome b, cytochrome c1 and Rieske protein, 2 core protein subunits, and several low-molecular weight protein subunits. The complex exists as an obligatory dimer and forms supercomplexes (SCs) in the inner mitochondrial membrane with cytochrome c oxidase (complex IV, CIV). [2Fe-2S] cluster serves as cofactor. As to expression, high levels are seen in the flowers while a low level expression is seen in the roots, leaves and stems.

Its subcellular location is the mitochondrion inner membrane. It carries out the reaction a quinol + 2 Fe(III)-[cytochrome c](out) = a quinone + 2 Fe(II)-[cytochrome c](out) + 2 H(+)(out). Component of the ubiquinol-cytochrome c oxidoreductase, a multisubunit transmembrane complex that is part of the mitochondrial electron transport chain which drives oxidative phosphorylation. The respiratory chain contains 3 multisubunit complexes succinate dehydrogenase (complex II, CII), ubiquinol-cytochrome c oxidoreductase (cytochrome b-c1 complex, complex III, CIII) and cytochrome c oxidase (complex IV, CIV), that cooperate to transfer electrons derived from NADH and succinate to molecular oxygen, creating an electrochemical gradient over the inner membrane that drives transmembrane transport and the ATP synthase. The cytochrome b-c1 complex catalyzes electron transfer from ubiquinol to cytochrome c, linking this redox reaction to translocation of protons across the mitochondrial inner membrane, with protons being carried across the membrane as hydrogens on the quinol. In the process called Q cycle, 2 protons are consumed from the matrix, 4 protons are released into the intermembrane space and 2 electrons are passed to cytochrome c. The Rieske protein is a catalytic core subunit containing a [2Fe-2S] iron-sulfur cluster. It cycles between 2 conformational states during catalysis to transfer electrons from the quinol bound in the Q(0) site in cytochrome b to cytochrome c1. The protein is Cytochrome b-c1 complex subunit Rieske-3, mitochondrial of Nicotiana tabacum (Common tobacco).